The sequence spans 612 residues: uncharacterized protein (612 aa).

Disordered stretches follow at residues 46 to 113, 129 to 185, 313 to 360, 457 to 488, and 593 to 612; these read QQPQ…MVTP, QQYQ…TPTY, TKDG…GSTM, FSIS…SGYG, and NNTN…VVTI. A compositionally biased stretch (low complexity) spans 58-102; the sequence is HQQIPISTQSTPNSTSSTTTTTTTTTSTTTAPTSNSKKSKTTPSN. Polar residues-rich tracts occupy residues 103 to 113 and 129 to 138; these read GNKPTSGMVTP and QQYQPNSQLQ. Over residues 143-169 the composition is skewed to low complexity; the sequence is IIKKSSLSTTPNNINNNNNNNNNTNTI. Residues 175–185 are compositionally biased toward polar residues; sequence GGNNSAPTPTY. Low complexity predominate over residues 323-359; the sequence is TTSSTSTSSSATSTTSSSTSSTTTTSSTSNSSTPGST.

This is an uncharacterized protein from Dictyostelium discoideum (Social amoeba).